A 301-amino-acid chain; its full sequence is Ribosomal protein L11 methyltransferase (301 aa).

4 residues coordinate S-adenosyl-L-methionine: threonine 130, glycine 151, aspartate 172, and asparagine 239.

The protein belongs to the methyltransferase superfamily. PrmA family.

Its subcellular location is the cytoplasm. The catalysed reaction is L-lysyl-[protein] + 3 S-adenosyl-L-methionine = N(6),N(6),N(6)-trimethyl-L-lysyl-[protein] + 3 S-adenosyl-L-homocysteine + 3 H(+). In terms of biological role, methylates ribosomal protein L11. This Campylobacter hominis (strain ATCC BAA-381 / DSM 21671 / CCUG 45161 / LMG 19568 / NCTC 13146 / CH001A) protein is Ribosomal protein L11 methyltransferase.